We begin with the raw amino-acid sequence, 358 residues long: Photosystem II protein D1 2 (358 aa).

3 helical membrane-spanning segments follow: residues 28 to 45 (YVGW…AATI), 117 to 132 (HFLI…QWEL), and 141 to 155 (WICV…AAMA). Residue H117 coordinates chlorophyll a. Y125 contacts pheophytin a. [CaMn4O5] cluster is bound by residues D169 and E188. A helical membrane pass occupies residues 196 to 217 (FHMLGVAGVFGGSLFSAMHGSL). A chlorophyll a-binding site is contributed by H197. Residues H214 and 263 to 264 (SF) each bind a quinone. A Fe cation-binding site is contributed by H214. Residue H271 participates in Fe cation binding. The helical transmembrane segment at 273 to 287 (FLGAWPVVGIWFTSM) threads the bilayer. H331, E332, D341, and A343 together coordinate [CaMn4O5] cluster. The propeptide occupies 344 to 358 (TVESTPVALQAPAIG).

The protein belongs to the reaction center PufL/M/PsbA/D family. As to quaternary structure, PSII is composed of 1 copy each of membrane proteins PsbA, PsbB, PsbC, PsbD, PsbE, PsbF, PsbH, PsbI, PsbJ, PsbK, PsbL, PsbM, PsbT, PsbX, PsbY, PsbZ, Psb30/Ycf12, peripheral proteins PsbO, CyanoQ (PsbQ), PsbU, PsbV and a large number of cofactors. It forms dimeric complexes. The D1/D2 heterodimer binds P680, chlorophylls that are the primary electron donor of PSII, and subsequent electron acceptors. It shares a non-heme iron and each subunit binds pheophytin, quinone, additional chlorophylls, carotenoids and lipids. D1 provides most of the ligands for the Mn4-Ca-O5 cluster of the oxygen-evolving complex (OEC). There is also a Cl(-1) ion associated with D1 and D2, which is required for oxygen evolution. The PSII complex binds additional chlorophylls, carotenoids and specific lipids. serves as cofactor. Tyr-160 forms a radical intermediate that is referred to as redox-active TyrZ, YZ or Y-Z. In terms of processing, C-terminally processed by CtpA; processing is essential to allow assembly of the oxygen-evolving complex and thus photosynthetic growth.

It is found in the cellular thylakoid membrane. It catalyses the reaction 2 a plastoquinone + 4 hnu + 2 H2O = 2 a plastoquinol + O2. Its function is as follows. Photosystem II (PSII) is a light-driven water:plastoquinone oxidoreductase that uses light energy to abstract electrons from H(2)O, generating O(2) and a proton gradient subsequently used for ATP formation. It consists of a core antenna complex that captures photons, and an electron transfer chain that converts photonic excitation into a charge separation. The D1/D2 (PsbA/PsbD) reaction center heterodimer binds P680, the primary electron donor of PSII as well as several subsequent electron acceptors. The protein is Photosystem II protein D1 2 of Parasynechococcus marenigrum (strain WH8102).